The primary structure comprises 49 residues: Large ribosomal subunit protein bL33 (49 aa).

It belongs to the bacterial ribosomal protein bL33 family.

The sequence is that of Large ribosomal subunit protein bL33 from Syntrophobacter fumaroxidans (strain DSM 10017 / MPOB).